Consider the following 437-residue polypeptide: Elongation factor 1-gamma (437 aa).

The residue at position 2 (alanine 2) is an N-acetylalanine. The 86-residue stretch at 2–87 folds into the GST N-terminal domain; sequence AAGTLYTYPE…YVSNEELRGS (86 aa). The GST C-terminal domain maps to 88–216; the sequence is TPEAAAQVVQ…VKLCEKMAQF (129 aa). 2 positions are modified to N6-acetyllysine: lysine 147 and lysine 212. The span at 221-254 shows a compositional bias: basic and acidic residues; the sequence is FAESQPKKDTPRKEKGSREEKQKPQTERKEEKKA. The tract at residues 221–268 is disordered; that stretch reads FAESQPKKDTPRKEKGSREEKQKPQTERKEEKKAAAPAPEEEMDECEQ. Residue lysine 253 forms a Glycyl lysine isopeptide (Lys-Gly) (interchain with G-Cter in SUMO1) linkage. The EF-1-gamma C-terminal domain occupies 276–437; sequence AKDPFAHLPK…KAVNQGKIFK (162 aa). Residue lysine 285 forms a Glycyl lysine isopeptide (Lys-Gly) (interchain with G-Cter in SUMO2) linkage. An N6-acetyllysine modification is found at lysine 401. Lysine 434 is modified (N6-acetyllysine; alternate). The residue at position 434 (lysine 434) is an N6-malonyllysine; alternate.

As to quaternary structure, EF-1 is composed of four subunits: alpha, beta, delta, and gamma.

Probably plays a role in anchoring the complex to other cellular components. In Rattus norvegicus (Rat), this protein is Elongation factor 1-gamma (Eef1g).